A 940-amino-acid chain; its full sequence is Leucine--tRNA ligase, mitochondrial (940 aa).

The 'HIGH' region signature appears at 54–64 (PYPSGALHMGH). A 'KMSKS' region motif is present at residues 638 to 642 (TINKL). K641 serves as a coordination point for ATP. The tract at residues 724–744 (KEQHQHQQQQHQQPLPSSEFN) is disordered.

The protein belongs to the class-I aminoacyl-tRNA synthetase family.

It localises to the mitochondrion. It carries out the reaction tRNA(Leu) + L-leucine + ATP = L-leucyl-tRNA(Leu) + AMP + diphosphate. The chain is Leucine--tRNA ligase, mitochondrial (mleuS) from Dictyostelium discoideum (Social amoeba).